A 170-amino-acid chain; its full sequence is Disulfide bond formation protein B 1 (170 aa).

Over 1 to 14 the chain is Cytoplasmic; the sequence is MNDYTLAIRRERRL. Residues 15-31 traverse the membrane as a helical segment; the sequence is LMLLGWVCIALLAGALY. Residues 32 to 49 lie on the Periplasmic side of the membrane; it reads LQYVKNEDPCPLCIIQRY. Cysteine 41 and cysteine 44 form a disulfide bridge. Residues 50 to 64 traverse the membrane as a helical segment; it reads FFCAIGIFAFLAAGI. Over 65 to 71 the chain is Cytoplasmic; it reads RNWRGVW. The chain crosses the membrane as a helical span at residues 72–89; the sequence is VLELLIAIAAAGGVGTAA. The Periplasmic segment spans residues 90–144; it reads RHLTIQMNPGFSCGFDTLQPIVDSLPPAQWFPGMFKVAGLCETVYPPIFGILLPG. Cysteine 102 and cysteine 130 are disulfide-bonded. The chain crosses the membrane as a helical span at residues 145-163; the sequence is WSLIGFAVILIAVVASLWR. The Cytoplasmic segment spans residues 164 to 170; it reads HRRKLVG.

This sequence belongs to the DsbB family.

It localises to the cell inner membrane. Its function is as follows. Required for disulfide bond formation in some periplasmic proteins. Acts by oxidizing the DsbA protein. This chain is Disulfide bond formation protein B 1, found in Burkholderia lata (strain ATCC 17760 / DSM 23089 / LMG 22485 / NCIMB 9086 / R18194 / 383).